A 101-amino-acid polypeptide reads, in one-letter code: Enhancer of yellow 2 transcription factor (101 aa).

This sequence belongs to the ENY2 family. In terms of assembly, component of the nuclear pore complex (NPC)-associated AMEX complex (anchoring and mRNA export complex), composed of at least e(y)2 and xmas-2. Component of the SAGA transcription coactivator-HAT complexes, at least composed of Ada2b, e(y)2, Pcaf/Gcn5, Taf10 and Nipped-A/Trrap. Within the SAGA complex, e(y)2, Sgf11, and not/nonstop form an additional subcomplex of SAGA called the DUB module (deubiquitination module). Component of the THO complex, composed of at least e(y)2, HPR1, THO2, THOC5, THOC6 and THOC7. Interacts with e(y)1. Interacts with su(Hw) (via zinc fingers). Interacts with xmas-2; required for localization to the nuclear periphery. Interacts with the nuclear pore complex (NPC).

The protein resides in the nucleus. It is found in the nucleoplasm. The protein localises to the cytoplasm. In terms of biological role, involved in mRNA export coupled transcription activation by association with both the AMEX and the SAGA complexes. The SAGA complex is a multiprotein complex that activates transcription by remodeling chromatin and mediating histone acetylation and deubiquitination. Within the SAGA complex, participates in a subcomplex that specifically deubiquitinates histone H2B. The SAGA complex is recruited to specific gene promoters by activators, where it is required for transcription. Required for nuclear receptor-mediated transactivation. Involved in transcription elongation by recruiting the THO complex onto nascent mRNA. The AMEX complex functions in docking export-competent ribonucleoprotein particles (mRNPs) to the nuclear entrance of the nuclear pore complex (nuclear basket). AMEX participates in mRNA export and accurate chromatin positioning in the nucleus by tethering genes to the nuclear periphery. The chain is Enhancer of yellow 2 transcription factor from Drosophila erecta (Fruit fly).